The following is a 300-amino-acid chain: (R)-3-hydroxydecanoyl-ACP:CoA transacylase (300 aa).

An AB hydrolase-1 domain is found at 29-253 (TIILVNGSLS…HTIRNAGHFI (225 aa)).

It participates in polyester biosynthesis; polyhydroxyalkanoate biosynthesis. Its function is as follows. Catalyzes the transfer of the acyl moiety from in vitro synthesized 3-hydroxydecanoyl-CoA to acyl carrier protein. The protein is (R)-3-hydroxydecanoyl-ACP:CoA transacylase (phaG) of Pseudomonas aeruginosa (strain ATCC 15692 / DSM 22644 / CIP 104116 / JCM 14847 / LMG 12228 / 1C / PRS 101 / PAO1).